Reading from the N-terminus, the 258-residue chain is Ribose-5-phosphate isomerase (258 aa).

This sequence belongs to the ribose 5-phosphate isomerase family.

The protein localises to the cytoplasm. It catalyses the reaction aldehydo-D-ribose 5-phosphate = D-ribulose 5-phosphate. It functions in the pathway carbohydrate degradation; pentose phosphate pathway; D-ribose 5-phosphate from D-ribulose 5-phosphate (non-oxidative stage): step 1/1. In Saccharomyces cerevisiae (strain YJM789) (Baker's yeast), this protein is Ribose-5-phosphate isomerase (RKI1).